The chain runs to 361 residues: Protein YIM1-2 (361 aa).

This sequence belongs to the YIM1 family.

The protein resides in the lipid droplet. Its subcellular location is the mitochondrion. This chain is Protein YIM1-2 (YIM1-2), found in Lachancea thermotolerans (strain ATCC 56472 / CBS 6340 / NRRL Y-8284) (Yeast).